The primary structure comprises 574 residues: Sulfate adenylyltransferase (574 aa).

Positions Met1–Tyr170 are N-terminal. Residues Asp171–Lys395 form a catalytic region. Gln198 lines the sulfate pocket. Residues Gln198 to Asn201 and Gly292 to His295 each bind ATP. Residues Thr199, Arg200, and Asn201 contribute to the active site. Arg200 lines the sulfate pocket. Residue Ala296 coordinates sulfate. Met334 contacts ATP. Residues Gln396 to Ile574 are allosteric regulation domain; adenylyl-sulfate kinase-like. Residues Glu435–Arg438, Arg452, Ile478–Ala479, and Lys519 each bind 3'-phosphoadenylyl sulfate.

The protein in the N-terminal section; belongs to the sulfate adenylyltransferase family. In the C-terminal section; belongs to the APS kinase family. As to quaternary structure, homohexamer. Dimer of trimers.

Its subcellular location is the cytoplasm. The enzyme catalyses sulfate + ATP + H(+) = adenosine 5'-phosphosulfate + diphosphate. Its pathway is sulfur metabolism; hydrogen sulfide biosynthesis; sulfite from sulfate: step 1/3. Allosterically inhibited by 3'-phosphoadenosine 5'-phosphosulfate (PAPS). Its function is as follows. Catalyzes the first intracellular reaction of sulfate assimilation, forming adenosine-5'-phosphosulfate (APS) from inorganic sulfate and ATP. Plays an important role in sulfate activation as a component of the biosynthesis pathway of sulfur-containing amino acids. In Mycosarcoma maydis (Corn smut fungus), this protein is Sulfate adenylyltransferase.